The sequence spans 406 residues: Peptidase T (406 aa).

A Zn(2+)-binding site is contributed by histidine 82. Aspartate 84 is an active-site residue. Residue aspartate 142 participates in Zn(2+) binding. The Proton acceptor role is filled by glutamate 176. Residues glutamate 177, aspartate 199, and histidine 381 each coordinate Zn(2+).

The protein belongs to the peptidase M20B family. Requires Zn(2+) as cofactor.

Its subcellular location is the cytoplasm. The enzyme catalyses Release of the N-terminal residue from a tripeptide.. In terms of biological role, cleaves the N-terminal amino acid of tripeptides. In Streptococcus agalactiae serotype Ia (strain ATCC 27591 / A909 / CDC SS700), this protein is Peptidase T.